The following is a 662-amino-acid chain: Interleukin-12 receptor subunit beta-1 (662 aa).

The N-terminal stretch at 1 to 23 (MEPLVTWVVPLLFLFLLSRQGAA) is a signal peptide. At 24 to 545 (CRTSECCFQD…RFSIEVQVSD (522 aa)) the chain is on the extracellular side. 5 consecutive Fibronectin type-III domains span residues 46-136 (GPRD…LYNS), 142-234 (PLGD…VPPE), 237-337 (PQPQ…IPAD), 338-444 (THTE…GNAS), and 448-542 (TPHH…IEVQ). The cysteines at positions 52 and 62 are disulfide-linked. A glycan (N-linked (GlcNAc...) asparagine) is linked at N121. The short motif at 222 to 226 (WSKWS) is the WSXWS motif element. Residues N329, N346, N352, N442, and N456 are each glycosylated (N-linked (GlcNAc...) asparagine). Residues 546–570 (WLIFFASLGSFLSILLVGVLGYLGL) traverse the membrane as a helical segment. The Cytoplasmic segment spans residues 571-662 (NRAARHLCPP…EDGDRCKAKM (92 aa)). A Box 1 motif motif is present at residues 577–585 (LCPPLPTPC). Residues 626-637 (GERTEPLEKTEL) show a composition bias toward basic and acidic residues. The interval 626 to 648 (GERTEPLEKTELPEGAPELALDT) is disordered.

This sequence belongs to the type I cytokine receptor family. Type 2 subfamily. As to quaternary structure, dimer or oligomer; disulfide-linked. Interacts with IL12RB2 to form the high affinity IL12 receptor. Heterodimer with IL23R; in presence of IL23. The heterodimer forms the IL23 receptor.

The protein resides in the membrane. Functionally, functions as an interleukin receptor which binds interleukin-12 with low affinity and is involved in IL12 transduction. Associated with IL12RB2 it forms a functional, high affinity receptor for IL12. Also associates with IL23R to form the interleukin-23 receptor which functions in IL23 signal transduction probably through activation of the Jak-Stat signaling cascade. This Homo sapiens (Human) protein is Interleukin-12 receptor subunit beta-1 (IL12RB1).